We begin with the raw amino-acid sequence, 129 residues long: Large ribosomal subunit protein bL21 (129 aa).

Belongs to the bacterial ribosomal protein bL21 family. Part of the 50S ribosomal subunit. Contacts protein L20.

Functionally, this protein binds to 23S rRNA in the presence of protein L20. The polypeptide is Large ribosomal subunit protein bL21 (Microcystis aeruginosa (strain NIES-843 / IAM M-2473)).